Here is a 267-residue protein sequence, read N- to C-terminus: Sulfate transporter CysZ (267 aa).

4 helical membrane passes run 29–49, 73–93, 149–169, and 212–232; these read FVIM…WLFI, ILLI…FTTL, IILF…PIIV, and GLVM…PVAV.

It belongs to the CysZ family.

Its subcellular location is the cell inner membrane. Its function is as follows. High affinity, high specificity proton-dependent sulfate transporter, which mediates sulfate uptake. Provides the sulfur source for the cysteine synthesis pathway. This chain is Sulfate transporter CysZ, found in Pasteurella multocida (strain Pm70).